The following is a 187-amino-acid chain: Protein P18, mitochondrial (187 aa).

The transit peptide at 1–17 directs the protein to the mitochondrion; the sequence is MRRLSSQLMCTAAAVRF. A disordered region spans residues 160 to 187; the sequence is NAAKAKADGKEHPSTLAQQQSLFDIKIQ.

The protein localises to the mitochondrion inner membrane. In terms of biological role, putative RNA-binding protein. The chain is Protein P18, mitochondrial from Leishmania tarentolae (Sauroleishmania tarentolae).